A 253-amino-acid polypeptide reads, in one-letter code: Demethylmenaquinone methyltransferase (253 aa).

S-adenosyl-L-methionine is bound by residues Thr-62, Asp-80, 102–103 (DA), and Ser-119.

This sequence belongs to the class I-like SAM-binding methyltransferase superfamily. MenG/UbiE family.

The catalysed reaction is a 2-demethylmenaquinol + S-adenosyl-L-methionine = a menaquinol + S-adenosyl-L-homocysteine + H(+). It functions in the pathway quinol/quinone metabolism; menaquinone biosynthesis; menaquinol from 1,4-dihydroxy-2-naphthoate: step 2/2. Functionally, methyltransferase required for the conversion of demethylmenaquinol (DMKH2) to menaquinol (MKH2). This Paenarthrobacter aurescens (strain TC1) protein is Demethylmenaquinone methyltransferase.